A 248-amino-acid chain; its full sequence is Eukaryotic translation initiation factor 6 (248 aa).

This sequence belongs to the eIF-6 family. In terms of assembly, monomer. Associates with the 60S ribosomal subunit.

It localises to the cytoplasm. It is found in the nucleus. Its subcellular location is the nucleolus. Its function is as follows. Binds to the 60S ribosomal subunit and prevents its association with the 40S ribosomal subunit to form the 80S initiation complex in the cytoplasm. May also be involved in ribosome biogenesis. This chain is Eukaryotic translation initiation factor 6, found in Trypanosoma cruzi (strain CL Brener).